A 254-amino-acid chain; its full sequence is Nickel import ATP-binding protein NikD (254 aa).

The ABC transporter domain maps to 2–241 (PQQIELRNIA…PKHAVTRSLV (240 aa)). Residue 36 to 43 (GGSGSGKS) coordinates ATP.

It belongs to the ABC transporter superfamily. Nickel importer (TC 3.A.1.5.3) family. The complex is composed of two ATP-binding proteins (NikD and NikE), two transmembrane proteins (NikB and NikC) and a solute-binding protein (NikA).

It localises to the cell inner membrane. It catalyses the reaction Ni(2+)(out) + ATP + H2O = Ni(2+)(in) + ADP + phosphate + H(+). Functionally, part of the ABC transporter complex NikABCDE involved in nickel import. Responsible for energy coupling to the transport system. In Shigella sonnei (strain Ss046), this protein is Nickel import ATP-binding protein NikD.